Here is a 197-residue protein sequence, read N- to C-terminus: MCCVSWNWVLACTFLLIFLSWWNCCNDRISVNSGVPGMAARVAGAHHVVLTEQDELLRLLRVNLAANAEVLTHEIEEEKGGIVARPLSWGIEHTKEYLARYGDEKIDVILSCDCIYEPLYGTSWKGLAQTMELLCLANPKSVVLLAVERRNEDGIDKFLAFVEKETMLLYRRDEVTVGSSKNRLEVYHLHLENILKN.

The N-terminal stretch at 1-27 (MCCVSWNWVLACTFLLIFLSWWNCCND) is a signal peptide. The RxLR-dEER signature appears at 58–79 (RLLRVNLAANAEVLTHEIEEEK).

Belongs to the RxLR effector family.

It localises to the secreted. Its subcellular location is the host nucleus. The protein localises to the host cytoplasm. Its function is as follows. Secreted effector that completely suppresses the host cell death induced by cell death-inducing proteins. The chain is Secreted RxLR effector protein 48 from Plasmopara viticola (Downy mildew of grapevine).